Reading from the N-terminus, the 332-residue chain is Ornithine carbamoyltransferase 1, catabolic (332 aa).

Residues 56-59 (STRT), Q83, R107, and 134-137 (HPTQ) contribute to the carbamoyl phosphate site. L-ornithine contacts are provided by residues N167, D231, and 235-236 (SM). Residues 273 to 274 (CL) and R318 contribute to the carbamoyl phosphate site.

The protein belongs to the aspartate/ornithine carbamoyltransferase superfamily. OTCase family.

The protein resides in the cytoplasm. The catalysed reaction is carbamoyl phosphate + L-ornithine = L-citrulline + phosphate + H(+). Its pathway is amino-acid degradation; L-arginine degradation via ADI pathway; carbamoyl phosphate from L-arginine: step 2/2. Its function is as follows. Reversibly catalyzes the transfer of the carbamoyl group from carbamoyl phosphate (CP) to the N(epsilon) atom of ornithine (ORN) to produce L-citrulline. This Staphylococcus epidermidis (strain ATCC 12228 / FDA PCI 1200) protein is Ornithine carbamoyltransferase 1, catabolic (arcB1).